We begin with the raw amino-acid sequence, 376 residues long: Chaperone protein DnaJ 2 (376 aa).

The J domain occupies 5–70 (DYYEVLGVNR…QKRAAYDRYG (66 aa)). A CR-type zinc finger spans residues 135 to 213 (GADKTIRIPT…CGGAGRVKRQ (79 aa)). Residues Cys-148, Cys-151, Cys-165, Cys-168, Cys-187, Cys-190, Cys-201, and Cys-204 each coordinate Zn(2+). 4 CXXCXGXG motif repeats span residues 148–155 (CETCHGSG), 165–172 (CPTCGGAG), 187–194 (CPKCHGTG), and 201–208 (CRDCGGAG).

The protein belongs to the DnaJ family. Homodimer. Zn(2+) is required as a cofactor.

It is found in the cytoplasm. In terms of biological role, participates actively in the response to hyperosmotic and heat shock by preventing the aggregation of stress-denatured proteins and by disaggregating proteins, also in an autonomous, DnaK-independent fashion. Unfolded proteins bind initially to DnaJ; upon interaction with the DnaJ-bound protein, DnaK hydrolyzes its bound ATP, resulting in the formation of a stable complex. GrpE releases ADP from DnaK; ATP binding to DnaK triggers the release of the substrate protein, thus completing the reaction cycle. Several rounds of ATP-dependent interactions between DnaJ, DnaK and GrpE are required for fully efficient folding. Also involved, together with DnaK and GrpE, in the DNA replication of plasmids through activation of initiation proteins. In Aromatoleum aromaticum (strain DSM 19018 / LMG 30748 / EbN1) (Azoarcus sp. (strain EbN1)), this protein is Chaperone protein DnaJ 2.